A 646-amino-acid chain; its full sequence is Zinc finger protein 493 (646 aa).

The segment at 26 to 48 (FQCDKYVKVFHKLLNSNRHNTKH) adopts a C2H2-type 1; degenerate zinc-finger fold. C2H2-type zinc fingers lie at residues 54–76 (FKCK…KRIH) and 82–104 (YRCE…RRVH). Residues 109–131 (SYKYECGKSFNQDSNLTTHKRIH) form a C2H2-type 4; degenerate zinc finger. A C2H2-type 5 zinc finger spans residues 137–159 (YKCEECGTSFYQFSYLTRHKLIH). Residues 165-187 (YKCEQYGKTFNQSSTLTGHKIIH) form a C2H2-type 6; degenerate zinc finger. Residues 193–215 (YKCEECGKAFSIFSTPTKHKIIH) form a C2H2-type 7; degenerate zinc finger. Residues 221–243 (HRCEEYCKAYKESSHLTTHKRIH) form a C2H2-type 8; degenerate zinc finger. 14 consecutive C2H2-type zinc fingers follow at residues 249–271 (YKCE…KIIH), 277–299 (HRCE…KRIH), 305–327 (YKCE…KIIH), 333–355 (YKCE…RIIH), 361–383 (YKCE…KIIH), 389–411 (YKCE…KMIH), 417–439 (YKCE…KRIH), 445–467 (YKCK…KIIH), 473–495 (YKCE…KKIH), 501–523 (YKCE…KQIH), 529–551 (YKCE…KIIH), 557–579 (YKCE…KIIH), 585–607 (CKCE…KLIH), and 613–635 (YKCE…KIIH).

The protein localises to the nucleus. May be involved in transcriptional regulation. The polypeptide is Zinc finger protein 493 (ZNF493) (Homo sapiens (Human)).